Reading from the N-terminus, the 318-residue chain is Strigolactone esterase D14 (318 aa).

Positions Met1 to Ser11 are enriched in pro residues. A disordered region spans residues Met1–Ser48. The span at Val36–Gly47 shows a compositional bias: gly residues. Ser147 acts as the Nucleophile in catalysis. Ser147 and Cys241 together coordinate substrate. Catalysis depends on residues Asp268 and His297. A substrate-binding site is contributed by His297.

It belongs to the AB hydrolase superfamily. In terms of assembly, interacts with D53. The interaction between D53 and D14 is enhanced in the presence of strigolactones. The interaction with D53 occurs in the presence of (2'R) stereoisomers of strigolactones, but not (2'S) stereoisomers. Interacts with SLR1 in a strigolactone-dependent manner. Interacts with D3 in a strigolactone-dependent manner. As to expression, expressed in the parenchyma cells of the root stele and lateral roots, vascular tissues of vein and leaf sheath, ligule base, auricle base and stem base.

The protein localises to the cytoplasm. It localises to the nucleus. In terms of biological role, involved in strigolactone (SL) signaling pathway. May function downstream of SL synthesis, as a component of hormone signaling or as an enzyme that participates in the conversion of SL to the bioactive form. Strigolactones are hormones that inhibit tillering and shoot branching through the MAX-dependent pathway, contribute to the regulation of shoot architectural response to phosphate-limiting conditions and function as rhizosphere signal that stimulates hyphal branching of arbuscular mycorrhizal fungi and trigger seed germination of root parasitic weeds. Strigolactone-dependent association of D14 with D3 and D53 (a repressor of SL signaling) triggers D53 ubiquitination and degradation. Hydrolyzes the butenolide ring of SLs. A reaction product D-OH is trapped in the cavity of D14, inducing the interaction with SLR1, and probably with other proteins such as D3 and D53. Contributes to the negative regulation of gibberellin signaling. This Oryza sativa subsp. japonica (Rice) protein is Strigolactone esterase D14.